The primary structure comprises 38 residues: Photosystem I reaction center subunit IX (38 aa).

Residues 4-24 form a helical membrane-spanning segment; it reads FLTTAPVFSAIWFTLTAGIMI.

Belongs to the PsaJ family.

The protein resides in the plastid. It localises to the organellar chromatophore thylakoid membrane. May help in the organization of the PsaE and PsaF subunits. The polypeptide is Photosystem I reaction center subunit IX (Paulinella chromatophora).